The following is an 857-amino-acid chain: DNA gyrase subunit A (857 aa).

One can recognise a Topo IIA-type catalytic domain in the interval 39-507 (LPDVRDGLKP…YEGDMSIEDL (469 aa)). The active-site O-(5'-phospho-DNA)-tyrosine intermediate is the Tyr-127. The GyrA-box signature appears at 534–540 (QKRGGKG). The disordered stretch occupies residues 825 to 857 (REAEEVDGDVAVDETAEGAATTGTDEGEAPSAE). Residues 828–840 (EEVDGDVAVDETA) show a composition bias toward acidic residues.

The protein belongs to the type II topoisomerase GyrA/ParC subunit family. In terms of assembly, heterotetramer, composed of two GyrA and two GyrB chains. In the heterotetramer, GyrA contains the active site tyrosine that forms a transient covalent intermediate with DNA, while GyrB binds cofactors and catalyzes ATP hydrolysis.

It localises to the cytoplasm. The enzyme catalyses ATP-dependent breakage, passage and rejoining of double-stranded DNA.. In terms of biological role, a type II topoisomerase that negatively supercoils closed circular double-stranded (ds) DNA in an ATP-dependent manner to modulate DNA topology and maintain chromosomes in an underwound state. Negative supercoiling favors strand separation, and DNA replication, transcription, recombination and repair, all of which involve strand separation. Also able to catalyze the interconversion of other topological isomers of dsDNA rings, including catenanes and knotted rings. Type II topoisomerases break and join 2 DNA strands simultaneously in an ATP-dependent manner. This chain is DNA gyrase subunit A, found in Streptomyces coelicolor (strain ATCC BAA-471 / A3(2) / M145).